The chain runs to 435 residues: Metacaspase-1A (435 aa).

2 disordered regions span residues methionine 1–proline 46 and tyrosine 106–glycine 129. Over residues serine 36–proline 46 the composition is skewed to pro residues. Catalysis depends on residues histidine 231 and cysteine 287.

This sequence belongs to the peptidase C14B family.

Its function is as follows. Involved in cell death (apoptosis). The polypeptide is Metacaspase-1A (casA) (Neosartorya fischeri (strain ATCC 1020 / DSM 3700 / CBS 544.65 / FGSC A1164 / JCM 1740 / NRRL 181 / WB 181) (Aspergillus fischerianus)).